Here is a 158-residue protein sequence, read N- to C-terminus: Na(+)/H(+) antiporter subunit E (158 aa).

Helical transmembrane passes span 22 to 41 (YTAVDFLIGYVVGIFILFVL) and 54 to 76 (IWAIIKLISLFFKELILANIDVI).

It belongs to the CPA3 antiporters (TC 2.A.63) subunit E family. As to quaternary structure, forms a heterooligomeric complex that consists of seven subunits: MrpA, MrpB, MrpC, MrpD, MrpE, MrpF and MrpG.

The protein resides in the cell membrane. Its function is as follows. Mnh complex is a Na(+)Li(+)/H(+) antiporter involved in Na(+) and/or Li(+) excretion and Na(+) resistance. Na(+)/H(+) antiport consumes a transmembrane electrical potential, and is thus inferred to be electrogenic. Does not transport K(+), Ca(2+) or Mg(2+). Functionally, mrp complex is a Na(+)/H(+) antiporter involved in Na(+) excretion and Na(+) resistance. This is Na(+)/H(+) antiporter subunit E (mrpE) from Alkalihalophilus pseudofirmus (strain ATCC BAA-2126 / JCM 17055 / OF4) (Bacillus pseudofirmus).